Reading from the N-terminus, the 342-residue chain is tRNA-specific 2-thiouridylase MnmA (342 aa).

ATP contacts are provided by residues 6–13 (GMSGGVDS) and leucine 32. The active-site Nucleophile is the cysteine 99. The cysteines at positions 99 and 190 are disulfide-linked. Glycine 124 provides a ligand contact to ATP. The interval 140 to 142 (KDQ) is interaction with tRNA. Cysteine 190 (cysteine persulfide intermediate) is an active-site residue. Residues 292 to 293 (RY) form an interaction with tRNA region.

The protein belongs to the MnmA/TRMU family.

Its subcellular location is the cytoplasm. The enzyme catalyses S-sulfanyl-L-cysteinyl-[protein] + uridine(34) in tRNA + AH2 + ATP = 2-thiouridine(34) in tRNA + L-cysteinyl-[protein] + A + AMP + diphosphate + H(+). Catalyzes the 2-thiolation of uridine at the wobble position (U34) of tRNA, leading to the formation of s(2)U34. This chain is tRNA-specific 2-thiouridylase MnmA, found in Hydrogenobaculum sp. (strain Y04AAS1).